An 83-amino-acid polypeptide reads, in one-letter code: UPF0270 protein CGSHiEE_07180 (83 aa).

Belongs to the UPF0270 family.

This Haemophilus influenzae (strain PittEE) protein is UPF0270 protein CGSHiEE_07180.